The sequence spans 400 residues: Probable transposase for insertion sequence element ISRM3-like (400 aa).

The protein belongs to the transposase mutator family.

In terms of biological role, required for the transposition of the insertion element. This Sinorhizobium fredii (strain NBRC 101917 / NGR234) protein is Probable transposase for insertion sequence element ISRM3-like.